The following is a 286-amino-acid chain: Pollen allergen Phl p 5a (286 aa).

Residues 1–34 (ADLGYGPATPAAPAAGYTPATPAAPAGADAAGKA) are compositionally biased toward low complexity. A disordered region spans residues 1–35 (ADLGYGPATPAAPAAGYTPATPAAPAGADAAGKAT).

Belongs to the Poa p IX/Phl p VI allergen family.

The protein localises to the secreted. The protein is Pollen allergen Phl p 5a of Phleum pratense (Common timothy).